Consider the following 518-residue polypeptide: Cytochrome P450 709B3 (518 aa).

Residues 3–23 (LISTINLLTIVLLLFVVSKIW) traverse the membrane as a helical segment. Cys465 serves as a coordination point for heme.

The protein belongs to the cytochrome P450 family. Requires heme as cofactor. Highly expressed in rosette leaves and siliques, and at lower levels in flowers.

It is found in the membrane. Plays a role in abscisic acid (ABA) and salt stress response. May regulate the salt stress response independently of well-characterized pathways. Does not function as cytokinin hydroxylase in yeast heterologous system. The polypeptide is Cytochrome P450 709B3 (Arabidopsis thaliana (Mouse-ear cress)).